Reading from the N-terminus, the 615-residue chain is MRLSFGKQRYHGGTTVTLTEQGASDSLRAAQAIFQNHSNEVSSPCPPVTVSRNPQTRLSEPSLQKSGRKQEQKKARIRTKQVPKIKTTAPNDVELSKKHRSSPAGKDNVSSTAQMAAALAHSQSKLSSDNNSSHSSALDTLKVLETPNLNGLLGIHSRSSSRNGSNESLTPGQRTPDNRSQENLLTSFSSGRRLSSSSMEPATNKDSNKALPKRRPSPPLQSSLVGSGQLHENENLSSISIDSRHSLNPDTSDVISNRSQTSLSQTINQLSLCESEPSIASSNTTTTTSNQGSGLPNLVPNYSSDMRKKKLVNKFKRKVFGSKPKHLSSQYEMDASSEELGQHEQQPSMRFKTTLRKTSVSTNAENDHASSLHEGNLRYKYNPSNDTYDVYDDTDSDSESDQNQDALTKPRKRDRIKRKIRNSANKTAHHRPIHRTRDRKFNEDKPWKSHTDITFVTDNERKRYESMWVSNRHRHLNLLSWWPSLTGDSGAINTLPEDGLILGIIVRDIWKRSNLPNSLLAEIYTKVDTRKDGTLDRKSFIVGMWLVDQCLYGRKLPNVVEQCVWDSVDRYASTMVVPVSTLKAMAKQKRKQMKEEIKNIKKENRVVLVDHNSSS.

Disordered regions lie at residues 38–135 (SNEV…SSHS), 152–260 (LLGI…NRSQ), 277–304 (PSIA…NYSS), and 323–445 (KPKH…NEDK). Polar residues predominate over residues 50–65 (VSRNPQTRLSEPSLQK). 2 stretches are compositionally biased toward low complexity: residues 121 to 135 (HSQS…SSHS) and 157 to 168 (SRSSSRNGSNES). Ser-180 bears the Phosphoserine mark. Over residues 184–198 (LLTSFSSGRRLSSSS) the composition is skewed to low complexity. Positions 248-260 (NPDTSDVISNRSQ) are enriched in polar residues. Residues 281–290 (SSNTTTTTSN) are compositionally biased toward low complexity. Over residues 365 to 377 (ENDHASSLHEGNL) the composition is skewed to basic and acidic residues. The span at 389–402 (DVYDDTDSDSESDQ) shows a compositional bias: acidic residues. Positions 409-438 (KPRKRDRIKRKIRNSANKTAHHRPIHRTRD) are enriched in basic residues. Residues 460–571 (ERKRYESMWV…QCVWDSVDRY (112 aa)) enclose the EH domain.

This sequence belongs to the IRS4 family. Interacts with INP51.

In terms of biological role, with TAX4, acts as a positive regulator of INP51 activity and phosphatidylinositol 4,5-bisphosphate turnover. Negatively regulates signaling through the cell integrity pathway, including the MAP kinase SLT2. Also seems to be involved in rDNA silencing. The chain is Increased rDNA silencing protein 4 (IRS4) from Saccharomyces cerevisiae (strain YJM789) (Baker's yeast).